We begin with the raw amino-acid sequence, 145 residues long: MRLNTLSPAAGSKPEKQRRGRGIGSGLGKTGGRGVKGQTSRSGGGKVRAGFEGGQMPLKIRLPKFGFFSRKSLVSAEVRLNEIAMVEGDVVDLSTLKQAGVVTKNIVFAKVVLSGNIDRAVTVRGVSVTKGARAAIEAAGGKIEE.

The segment at 1-50 (MRLNTLSPAAGSKPEKQRRGRGIGSGLGKTGGRGVKGQTSRSGGGKVRAG) is disordered. The span at 22 to 35 (GIGSGLGKTGGRGV) shows a compositional bias: gly residues.

It belongs to the universal ribosomal protein uL15 family. Part of the 50S ribosomal subunit.

Its function is as follows. Binds to the 23S rRNA. This Aeromonas salmonicida (strain A449) protein is Large ribosomal subunit protein uL15.